Reading from the N-terminus, the 259-residue chain is ATP synthase subunit a (259 aa).

Residues 1–10 (MFNLLNTYIT) constitute a propeptide, removed in mature form. The next 6 membrane-spanning stretches (helical) occupy residues 36–56 (LTTF…LYTL), 92–112 (WGLY…ANLI), 125–145 (LVFI…LGLY), 150–170 (VFFS…LLVI), 191–211 (ILAG…FMLI), and 216–236 (LVFG…EFAI).

It belongs to the ATPase A chain family. F-type ATPases have 2 components, CF(1) - the catalytic core - and CF(0) - the membrane proton channel. In yeast, the dimeric form of ATP synthase consists of 17 polypeptides: alpha, beta, gamma, delta, epsilon, 4 (B), 5 (OSCP), 6 (A), 8, 9 (C), d, E (Tim11), f, g, h, i/j and k.

The protein localises to the mitochondrion inner membrane. Its function is as follows. Mitochondrial membrane ATP synthase (F(1)F(0) ATP synthase or Complex V) produces ATP from ADP in the presence of a proton gradient across the membrane which is generated by electron transport complexes of the respiratory chain. F-type ATPases consist of two structural domains, F(1) - containing the extramembraneous catalytic core and F(0) - containing the membrane proton channel, linked together by a central stalk and a peripheral stalk. During catalysis, ATP synthesis in the catalytic domain of F(1) is coupled via a rotary mechanism of the central stalk subunits to proton translocation. Key component of the proton channel; it may play a direct role in the translocation of protons across the membrane. The chain is ATP synthase subunit a (ATP6) from Saccharomyces cerevisiae (strain ATCC 204508 / S288c) (Baker's yeast).